Reading from the N-terminus, the 159-residue chain is Protein-export protein SecB (159 aa).

The protein belongs to the SecB family. Homotetramer, a dimer of dimers. One homotetramer interacts with 1 SecA dimer.

Its subcellular location is the cytoplasm. One of the proteins required for the normal export of preproteins out of the cell cytoplasm. It is a molecular chaperone that binds to a subset of precursor proteins, maintaining them in a translocation-competent state. It also specifically binds to its receptor SecA. The protein is Protein-export protein SecB of Rhizobium etli (strain CIAT 652).